We begin with the raw amino-acid sequence, 592 residues long: Frizzled-1 (592 aa).

The interval 1 to 26 is disordered; that stretch reads MAERRGPAGGGSGEVGGGRRAGGDRC. The signal sequence occupies residues 1 to 48; the sequence is MAERRGPAGGGSGEVGGGRRAGGDRCPRRPPALPLLLLLWAAALPAGG. The span at 7–20 shows a compositional bias: gly residues; sequence PAGGGSGEVGGGRR. Over 49–271 the chain is Extracellular; that stretch reads QPAAQPAALS…PEELRFSRTW (223 aa). The FZ domain occupies 65–184; the sequence is PDHGYCQPIS…HGAGELCVGQ (120 aa). 5 cysteine pairs are disulfide-bonded: Cys70-Cys131, Cys78-Cys124, Cys115-Cys152, Cys141-Cys181, and Cys145-Cys169. A glycan (N-linked (GlcNAc...) asparagine) is linked at Asn84. Asn185 is a glycosylation site (N-linked (GlcNAc...) asparagine). Residues 185 to 219 form a disordered region; that stretch reads NASERGTPTPALRPESWTSNPHRGGGAGGSGPGEA. Over residues 207-218 the composition is skewed to gly residues; sequence RGGGAGGSGPGE. A helical membrane pass occupies residues 272–292; the sequence is IGIWSVLCCASTLFTVLTYLV. At 293–303 the chain is on the cytoplasmic side; sequence DMKRFSYPERP. A helical membrane pass occupies residues 304 to 324; sequence IIFLSGCYTAVAVAYIAGFLL. The Extracellular portion of the chain corresponds to 325–351; that stretch reads EERVVCNERFAEDGSRTVAQGTKREGC. A helical membrane pass occupies residues 352-372; that stretch reads TILFMMLYFFGMASSIWWVIL. The Cytoplasmic portion of the chain corresponds to 373-394; the sequence is SLTWFLAAGMKWGHEAIEANSQ. A helical membrane pass occupies residues 395 to 415; that stretch reads YFHLAAWAVPAIKTITILALG. Topologically, residues 416 to 438 are extracellular; that stretch reads QVDGDVLSGVCFVGINNVDALRG. The chain crosses the membrane as a helical span at residues 439–459; sequence FVLAPLFVYLFIGTSFLLAGF. Residues 460–485 lie on the Cytoplasmic side of the membrane; sequence VSLFRIRTIMKHDGTKTEKLEKLMVR. The helical transmembrane segment at 486–506 threads the bilayer; the sequence is IGIFSVLYTVPATIVIACYFY. The Extracellular portion of the chain corresponds to 507–546; the sequence is EQAFREQWERSWVTQSCKSYAIPCPNNHSSHHPPMSPDFT. Asn533 is a glycosylation site (N-linked (GlcNAc...) asparagine). A helical transmembrane segment spans residues 547 to 567; that stretch reads VFMIKYLMTLIVGITSGFWIW. At 568-592 the chain is on the cytoplasmic side; the sequence is SGKTLNSWRKFYTRLTNSKQGETTV. The Lys-Thr-X-X-X-Trp motif, mediates interaction with the PDZ domain of Dvl family members motif lies at 570–575; sequence KTLNSW. Positions 590–592 match the PDZ-binding motif; that stretch reads TTV.

It belongs to the G-protein coupled receptor Fz/Smo family. As to expression, expressed in the lens, otic placode (medial wall of the vesicle) and in epibranchial placode. Also expressed in the developing somites (dermomyotome).

It is found in the cell membrane. Receptor for Wnt proteins. Functions in the canonical Wnt/beta-catenin signaling pathway. The canonical Wnt/beta-catenin signaling pathway leads to the activation of disheveled proteins, inhibition of GSK-3 kinase, nuclear accumulation of beta-catenin and activation of Wnt target genes. A second signaling pathway involving PKC and calcium fluxes has been seen for some family members, but it is not yet clear if it represents a distinct pathway or if it can be integrated in the canonical pathway, as PKC seems to be required for Wnt-mediated inactivation of GSK-3 kinase. Both pathways seem to involve interactions with G-proteins. May be involved in transduction and intercellular transmission of polarity information during tissue morphogenesis and/or in differentiated tissues. This is Frizzled-1 (FZD1) from Gallus gallus (Chicken).